Consider the following 653-residue polypeptide: UvrABC system protein B (653 aa).

The Helicase ATP-binding domain maps to glutamate 25–serine 182. Glycine 38–threonine 45 contacts ATP. A Beta-hairpin motif is present at residues tyrosine 91–isoleucine 114. The 163-residue stretch at glutamine 429–valine 591 folds into the Helicase C-terminal domain. Residues glutamate 616–histidine 651 enclose the UVR domain.

It belongs to the UvrB family. In terms of assembly, forms a heterotetramer with UvrA during the search for lesions. Interacts with UvrC in an incision complex.

The protein localises to the cytoplasm. Functionally, the UvrABC repair system catalyzes the recognition and processing of DNA lesions. A damage recognition complex composed of 2 UvrA and 2 UvrB subunits scans DNA for abnormalities. Upon binding of the UvrA(2)B(2) complex to a putative damaged site, the DNA wraps around one UvrB monomer. DNA wrap is dependent on ATP binding by UvrB and probably causes local melting of the DNA helix, facilitating insertion of UvrB beta-hairpin between the DNA strands. Then UvrB probes one DNA strand for the presence of a lesion. If a lesion is found the UvrA subunits dissociate and the UvrB-DNA preincision complex is formed. This complex is subsequently bound by UvrC and the second UvrB is released. If no lesion is found, the DNA wraps around the other UvrB subunit that will check the other stand for damage. This is UvrABC system protein B from Anaplasma phagocytophilum (strain HZ).